The sequence spans 426 residues: Serine--tRNA ligase (426 aa).

T233–E235 serves as a coordination point for L-serine. ATP is bound at residue R264–E266. L-serine is bound at residue E287. E351–S354 provides a ligand contact to ATP. S387 is an L-serine binding site.

It belongs to the class-II aminoacyl-tRNA synthetase family. Type-1 seryl-tRNA synthetase subfamily. In terms of assembly, homodimer. The tRNA molecule binds across the dimer.

The protein resides in the cytoplasm. The enzyme catalyses tRNA(Ser) + L-serine + ATP = L-seryl-tRNA(Ser) + AMP + diphosphate + H(+). It carries out the reaction tRNA(Sec) + L-serine + ATP = L-seryl-tRNA(Sec) + AMP + diphosphate + H(+). It functions in the pathway aminoacyl-tRNA biosynthesis; selenocysteinyl-tRNA(Sec) biosynthesis; L-seryl-tRNA(Sec) from L-serine and tRNA(Sec): step 1/1. Its function is as follows. Catalyzes the attachment of serine to tRNA(Ser). Is also able to aminoacylate tRNA(Sec) with serine, to form the misacylated tRNA L-seryl-tRNA(Sec), which will be further converted into selenocysteinyl-tRNA(Sec). This chain is Serine--tRNA ligase, found in Stutzerimonas stutzeri (strain A1501) (Pseudomonas stutzeri).